A 263-amino-acid chain; its full sequence is Proteasome subunit alpha type-1 (263 aa).

At M1 the chain carries N-acetylmethionine. S110 carries the post-translational modification Phosphoserine; alternate. A glycan (O-linked (GlcNAc) serine; alternate) is linked at S110. K115 is covalently cross-linked (Glycyl lysine isopeptide (Lys-Gly) (interchain with G-Cter in ubiquitin)). A Phosphoserine modification is found at S177. K208 participates in a covalent cross-link: Glycyl lysine isopeptide (Lys-Gly) (interchain with G-Cter in ubiquitin). A disordered region spans residues F232–H263. The span at P253–H263 shows a compositional bias: basic and acidic residues.

This sequence belongs to the peptidase T1A family. As to quaternary structure, the 26S proteasome consists of a 20S proteasome core and two 19S regulatory subunits. The 20S proteasome core is a barrel-shaped complex made of 28 subunits that are arranged in four stacked rings. The two outer rings are each formed by seven alpha subunits, and the two inner rings are formed by seven beta subunits. The proteolytic activity is exerted by three beta-subunits PSMB5, PSMB6 and PSMB7. Interacts with NOTCH3. Interacts with ZFAND1. C-terminal extension is partially cleaved off by limited proteolysis leading to a conversion of the proteasome from its latent into its active form. In terms of tissue distribution, detected in liver (at protein level).

The protein resides in the cytoplasm. It localises to the nucleus. In terms of biological role, component of the 20S core proteasome complex involved in the proteolytic degradation of most intracellular proteins. This complex plays numerous essential roles within the cell by associating with different regulatory particles. Associated with two 19S regulatory particles, forms the 26S proteasome and thus participates in the ATP-dependent degradation of ubiquitinated proteins. The 26S proteasome plays a key role in the maintenance of protein homeostasis by removing misfolded or damaged proteins that could impair cellular functions, and by removing proteins whose functions are no longer required. Associated with the PA200 or PA28, the 20S proteasome mediates ubiquitin-independent protein degradation. This type of proteolysis is required in several pathways including spermatogenesis (20S-PA200 complex) or generation of a subset of MHC class I-presented antigenic peptides (20S-PA28 complex). This Mus musculus (Mouse) protein is Proteasome subunit alpha type-1 (Psma1).